Here is a 423-residue protein sequence, read N- to C-terminus: CinA-like protein (423 aa).

The protein belongs to the CinA family.

The polypeptide is CinA-like protein (Prochlorococcus marinus (strain SARG / CCMP1375 / SS120)).